Here is a 412-residue protein sequence, read N- to C-terminus: Peptidase T (412 aa).

Histidine 84 provides a ligand contact to Zn(2+). The active site involves aspartate 86. Position 146 (aspartate 146) interacts with Zn(2+). Glutamate 179 acts as the Proton acceptor in catalysis. 3 residues coordinate Zn(2+): glutamate 180, aspartate 202, and histidine 385.

It belongs to the peptidase M20B family. Requires Zn(2+) as cofactor.

The protein localises to the cytoplasm. It carries out the reaction Release of the N-terminal residue from a tripeptide.. In terms of biological role, cleaves the N-terminal amino acid of tripeptides. This Haemophilus influenzae (strain ATCC 51907 / DSM 11121 / KW20 / Rd) protein is Peptidase T.